Consider the following 156-residue polypeptide: MNVIEGAIAAPNAKIAIVIARFNSFINESLLAGALDALKRQGQVSDDNITVVRCPGAYELPLVAQQVAKSDRYDAIVALGSVIRGGTPHFDYVAGECNKGLAQVALEYNTPVAFGVLTVDSIEQAIERAGTKAGNKGAEAALSALEMVNVLSQIES.

Residues F22, 57-59 (AYE), and 81-83 (SVI) contribute to the 5-amino-6-(D-ribitylamino)uracil site. Residue 86 to 87 (GT) participates in (2S)-2-hydroxy-3-oxobutyl phosphate binding. H89 functions as the Proton donor in the catalytic mechanism. F114 provides a ligand contact to 5-amino-6-(D-ribitylamino)uracil. R128 is a (2S)-2-hydroxy-3-oxobutyl phosphate binding site.

This sequence belongs to the DMRL synthase family. Forms an icosahedral capsid composed of 60 subunits, arranged as a dodecamer of pentamers.

It carries out the reaction (2S)-2-hydroxy-3-oxobutyl phosphate + 5-amino-6-(D-ribitylamino)uracil = 6,7-dimethyl-8-(1-D-ribityl)lumazine + phosphate + 2 H2O + H(+). The protein operates within cofactor biosynthesis; riboflavin biosynthesis; riboflavin from 2-hydroxy-3-oxobutyl phosphate and 5-amino-6-(D-ribitylamino)uracil: step 1/2. Catalyzes the formation of 6,7-dimethyl-8-ribityllumazine by condensation of 5-amino-6-(D-ribitylamino)uracil with 3,4-dihydroxy-2-butanone 4-phosphate. This is the penultimate step in the biosynthesis of riboflavin. In Photobacterium profundum (strain SS9), this protein is 6,7-dimethyl-8-ribityllumazine synthase.